Reading from the N-terminus, the 395-residue chain is GPI-anchor transamidase (395 aa).

A signal peptide spans 1–27 (MVDTCFLSRGLTTLAGLLLLPFGSLAA). Residues 28 to 368 (SQIEDQAEQF…PKLKDWHPPG (341 aa)) lie on the Lumenal side of the membrane. Ca(2+)-binding residues include Asp-79, Ile-82, Glu-118, and Asp-120. His-164 functions as the Proton donor in the catalytic mechanism. Cys-206 (nucleophile; acyl-thioester intermediate) is an active-site residue. The a protein site is built by Cys-206, Ser-232, and Ser-234. The tract at residues 231–236 (DSLSHQ) is autoinhibitory loop. Cys-275 and Cys-280 are joined by a disulfide. Residues 369 to 385 (GFILGLWALIIMVFFKT) traverse the membrane as a helical segment. The Cytoplasmic portion of the chain corresponds to 386–395 (YGIKHMKFIF).

It belongs to the peptidase C13 family. Heteropentamer. Part of the GPI-anchor transamidase complex, consisting of PIGK, PIGT, PIGS, PIGU and GAA1. Interacts with GPAA1. Interacts with PIGT; this interaction, via a disulfide link, stabilizes the expression of GAA1 and PIGK and links them to PIGS. Post-translationally, the disulfide bond between PIGK/GPI8 and PIGT is important for normal enzyme activity.

It localises to the endoplasmic reticulum membrane. Its pathway is glycolipid biosynthesis; glycosylphosphatidylinositol-anchor biosynthesis. In the absence of proproteins substrates, exists in an inactive state with a disrupted catalytic site by an autoinhibitory loop. The binding of proprotein substrates, particularly the CSP region, to GPI-T triggers concerted conformational changes that alleviate the inhibition by the autoinhibitory loop. Meanwhile, proprotein residues near the omega- site induce the formation of a catalytic cleft for catalysis, following which the products are released and GPI-T reverts to the inactive state. Catalytic subunit of the glycosylphosphatidylinositol-anchor (GPI-anchor) transamidase (GPI-T) complex that catalyzes the formation of the linkage between a proprotein and a GPI-anchor and participates in GPI anchored protein biosynthesis. Recognizes diverse proproteins at a C-terminal signal peptide (CSP) region that lacks consensus sequence and replaces it with a GPI-anchor via a transamidation reaction. Transamidation catalysis reaction follows a two-phase mechanism. In the acyl-enzyme phase, the carbonyl group of the proproteins's omega-site undergoes a nucleophilic attack forming an enzyme-substrate thioester bond. Followed by a general acid catalysis that allows CSP releasing, regenerating the carbonyl, and forming the acyl-enzyme intermediate. In the GPI-anchor attachment phase, the amino group of the GPI-anchor's ethanolamine phosphate, the one on third mannose (EtNP3), mediates a nucleophilic attack on the carbonyl of the acyl-enzyme intermediate, replacing the CSP, allowing GPI-anchor attachment to the omega-residue, therefore forming the product and freeing the enzyme. This chain is GPI-anchor transamidase, found in Bos taurus (Bovine).